Consider the following 242-residue polypeptide: DnaJ homolog subfamily B member 6 (242 aa).

In terms of domain architecture, J spans 2 to 69 (VDYYEVLGVQ…KKRDIYDRYG (68 aa)). The interaction with HSP70 stretch occupies residues 2 to 146 (VDYYEVLGVQ…TGSFFSTFSG (145 aa)). The interval 119-242 (FEDFFGHRRG…KEQLLRLDNK (124 aa)) is interaction with KRT18. Arg-135 carries the omega-N-methylarginine modification.

In terms of assembly, homooligomer. Interacts with BAG3, HSPB8 and STUB1. Interacts with ALKBH1. Interacts with HSP70, KRT18 and PTTG. In terms of tissue distribution, expressed in all tissues examined with highest expression in brain and retina and lower levels observed in testis, spleen, heart, liver and kidney.

It localises to the cytoplasm. The protein resides in the perinuclear region. Its subcellular location is the nucleus. It is found in the myofibril. The protein localises to the sarcomere. It localises to the z line. In terms of biological role, has a stimulatory effect on the ATPase activity of HSP70 in a dose-dependent and time-dependent manner and hence acts as a co-chaperone of HSP70. Plays an indispensable role in the organization of KRT8/KRT18 filaments. Acts as an endogenous molecular chaperone for neuronal proteins including huntingtin. Suppresses aggregation and toxicity of polyglutamine-containing, aggregation-prone proteins. Also reduces cellular toxicity and caspase-3 activity. The protein is DnaJ homolog subfamily B member 6 (DNAJB6) of Bos taurus (Bovine).